The primary structure comprises 341 residues: Phenylalanine--tRNA ligase alpha subunit (341 aa).

Glutamate 254 contacts Mg(2+).

Belongs to the class-II aminoacyl-tRNA synthetase family. Phe-tRNA synthetase alpha subunit type 1 subfamily. Tetramer of two alpha and two beta subunits. Mg(2+) serves as cofactor.

The protein localises to the cytoplasm. It carries out the reaction tRNA(Phe) + L-phenylalanine + ATP = L-phenylalanyl-tRNA(Phe) + AMP + diphosphate + H(+). The chain is Phenylalanine--tRNA ligase alpha subunit (pheS) from Mycoplasma genitalium (strain ATCC 33530 / DSM 19775 / NCTC 10195 / G37) (Mycoplasmoides genitalium).